We begin with the raw amino-acid sequence, 1486 residues long: Chromosome partition protein MukB (1486 aa).

34–41 lines the ATP pocket; sequence GGNGAGKS. 3 coiled-coil regions span residues 326–418, 444–480, and 509–603; these read LEAD…QYNQ, LETF…QAYQ, and RHLA…RAPV. A flexible hinge region spans residues 666 to 783; sequence PGGSEDQRLN…EVPLFGRAAR (118 aa). Coiled-coil stretches lie at residues 835–923, 977–1115, and 1209–1266; these read EAEI…AKLE, EMLS…TAKA, and VEAI…QNVS.

It belongs to the SMC family. MukB subfamily. Homodimerization via its hinge domain. Binds to DNA via its C-terminal region. Interacts, and probably forms a ternary complex, with MukE and MukF via its C-terminal region. The complex formation is stimulated by calcium or magnesium. Interacts with tubulin-related protein FtsZ.

The protein resides in the cytoplasm. It localises to the nucleoid. Its function is as follows. Plays a central role in chromosome condensation, segregation and cell cycle progression. Functions as a homodimer, which is essential for chromosome partition. Involved in negative DNA supercoiling in vivo, and by this means organize and compact chromosomes. May achieve or facilitate chromosome segregation by condensation DNA from both sides of a centrally located replisome during cell division. The chain is Chromosome partition protein MukB from Escherichia coli (strain SMS-3-5 / SECEC).